A 121-amino-acid polypeptide reads, in one-letter code: Nitrogenase-stabilizing/protective protein NifW (121 aa).

It belongs to the NifW family. In terms of assembly, homotrimer; associates with NifD.

May protect the nitrogenase Fe-Mo protein from oxidative damage. The polypeptide is Nitrogenase-stabilizing/protective protein NifW (Synechococcus sp. (strain JA-2-3B'a(2-13)) (Cyanobacteria bacterium Yellowstone B-Prime)).